Here is a 120-residue protein sequence, read N- to C-terminus: Large ribosomal subunit protein uL18 (120 aa).

The protein belongs to the universal ribosomal protein uL18 family. As to quaternary structure, part of the 50S ribosomal subunit; part of the 5S rRNA/L5/L18/L25 subcomplex. Contacts the 5S and 23S rRNAs.

Functionally, this is one of the proteins that bind and probably mediate the attachment of the 5S RNA into the large ribosomal subunit, where it forms part of the central protuberance. In Bartonella bacilliformis (strain ATCC 35685 / KC583 / Herrer 020/F12,63), this protein is Large ribosomal subunit protein uL18.